Consider the following 287-residue polypeptide: Pantothenate synthetase (287 aa).

ATP is bound at residue 30–37 (MGALHSGH). The Proton donor role is filled by His-37. (R)-pantoate is bound at residue Gln-61. A beta-alanine-binding site is contributed by Gln-61. 152-155 (GQKD) contacts ATP. A (R)-pantoate-binding site is contributed by Gln-158. ATP-binding positions include Ile-181 and 189–192 (ESSR).

This sequence belongs to the pantothenate synthetase family. In terms of assembly, homodimer.

The protein localises to the cytoplasm. It carries out the reaction (R)-pantoate + beta-alanine + ATP = (R)-pantothenate + AMP + diphosphate + H(+). The protein operates within cofactor biosynthesis; (R)-pantothenate biosynthesis; (R)-pantothenate from (R)-pantoate and beta-alanine: step 1/1. Its function is as follows. Catalyzes the condensation of pantoate with beta-alanine in an ATP-dependent reaction via a pantoyl-adenylate intermediate. The sequence is that of Pantothenate synthetase from Corynebacterium efficiens (strain DSM 44549 / YS-314 / AJ 12310 / JCM 11189 / NBRC 100395).